Here is a 900-residue protein sequence, read N- to C-terminus: MNYPGRGSPRSPEHNGRGGGGGAWELGSDARPAFGGGVCCFEHLPGGDPDDGDVPLALLRGEPGLHLAPGTDDHNHHLALDPCLSDENYDFSSAESGSSLRYYSEGESGGGGSSLSLHPPQQPPLVPTNSGGGGATGGSPGERKRTRLGGPAARHRYEVVTELGPEEVRWFYKEDKKTWKPFIGYDSLRIELAFRTLLQTTGARPQGGDRDGDHVCSPTGPASSSGEDDDEDRACGFCQSTTGHEPEMVELVNIEPVCVRGGLYEVDVTQGECYPVYWNQADKIPVMRGQWFIDGTWQPLEEEESNLIEQEHLNCFRGQQMQENFDIEVSKSIDGKDAVHSFKLSRNHVDWHSVDEVYLYSDATTSKIARTVTQKLGFSKASSSGTRLHRGYVEEATLEDKPSQTTHIVFVVHGIGQKMDQGRIIKNTAMMREAARKIEERHFSNHATHVEFLPVEWRSKLTLDGDTVDSITPDKVRGLRDMLNSSAMDIMYYTSPLYRDELVKGLQQELNRLYSLFCSRNPDFEEKGGKVSIVSHSLGCVITYDIMTGWNPVRLYEQLLQKEEELPDERWMSYEERHLLDELYITKRRLKEIEERLHGLKASSMTQTPALKFKVENFFCMGSPLAVFLALRGIRPGNTGSQDHILPREICNRLLNIFHPTDPVAYRLEPLILKHYSNISPVQIHWYNTSNPLPYEHMKPSFLNPAKEPTSVSENEGISTIPSPVTSPVLSRRHYGESITNIGKASILGAASIGKGLGGMLFSRFGRSSTTQSSETSKDSMEDEKKPVASPSATTVGTQTLPHSSSGFLDSAYFRLQESFFNLPQLLFPENVMQNKDNALVELDHRIDFELREGLVESRYWSAVTSHTAYWSSLDVALFLLTFMYKHEHDDDAKPNLDPI.

Disordered stretches follow at residues 1-28 (MNYP…ELGS), 100-152 (LRYY…GGPA), and 202-233 (GARP…DEDR). 2 positions are modified to phosphoserine: serine 8 and serine 11. The segment covering 130 to 140 (SGGGGATGGSP) has biased composition (gly residues). The active site involves serine 537. Residues 611–886 (LKFKVENFFC…ALFLLTFMYK (276 aa)) enclose the DDHD domain. 2 disordered regions span residues 706–725 (AKEP…PSPV) and 768–801 (SSTT…TQTL). A compositionally biased stretch (polar residues) spans 710-725 (TSVSENEGISTIPSPV). The residue at position 723 (serine 723) is a Phosphoserine. Residues 776 to 787 (TSKDSMEDEKKP) are compositionally biased toward basic and acidic residues. The segment covering 791-801 (PSATTVGTQTL) has biased composition (polar residues).

This sequence belongs to the PA-PLA1 family. Forms homooligomers and, to a much smaller extent, heterooligomers with DDHD2. As to expression, highly expressed in testis. Also expressed in brain, spleen and lung. Only expressed in cerebellum in fetal brain.

It is found in the cytoplasm. The enzyme catalyses a 1,2-diacyl-sn-glycero-3-phosphate + H2O = a 2-acyl-sn-glycerol 3-phosphate + a fatty acid + H(+). The catalysed reaction is a 1,2-diacyl-sn-glycero-3-phospho-(1D-myo-inositol) + H2O = a 2-acyl-sn-glycero-3-phospho-D-myo-inositol + a fatty acid + H(+). It carries out the reaction 1-octadecanoyl-2-(5Z,8Z,11Z,14Z-eicosatetraenoyl)-sn-glycero-3-phospho-(1D-myo-inositol) + H2O = 2-(5Z,8Z,11Z,14Z-eicosatetraenoyl)-sn-glycero-3-phospho-(1D-myo-inositol) + octadecanoate + H(+). It catalyses the reaction a 1-acyl-2-(5Z,8Z,11Z,14Z-eicosatetraenoyl)-sn-glycero-3-phospho-(1D-myo-inositol) + H2O = 2-(5Z,8Z,11Z,14Z-eicosatetraenoyl)-sn-glycero-3-phospho-(1D-myo-inositol) + a fatty acid + H(+). The enzyme catalyses 1,2-dihexadecanoyl-sn-glycero-3-phospho-(1D-myo-inositol) + H2O = 2-hexadecanoyl-sn-glycero-3-phospho-(1D-myo-inositol) + hexadecanoate + H(+). The catalysed reaction is a 1-acyl-2-(5Z,8Z,11Z,14Z)-eicosatetraenoyl-sn-glycero-3-phosphate + H2O = 2-(5Z,8Z,11Z,14Z-eicosatetraenoyl)-sn-glycero-3-phosphate + a fatty acid + H(+). It carries out the reaction 1,2-di-(9Z-octadecenoyl)-sn-glycero-3-phosphate + H2O = 2-(9Z-octadecenoyl)-sn-glycero-3-phosphate + (9Z)-octadecenoate + H(+). It catalyses the reaction 1-hexadecanoyl-2-(9Z-octadecenoyl)-sn-glycero-3-phosphate + H2O = 2-(9Z-octadecenoyl)-sn-glycero-3-phosphate + hexadecanoate + H(+). The enzyme catalyses 1-hexadecanoyl-2-(9Z-octadecenoyl)-sn-glycero-3-phospho-L-serine + H2O = 2-(9Z-octadecenoyl)-sn-glycero-3-phospho-L-serine + hexadecanoate + H(+). The catalysed reaction is 1,2-di-(5Z,8Z,11Z,14Z)-eicosatetraenoyl-sn-glycero-3-phosphate + H2O = 2-(5Z,8Z,11Z,14Z-eicosatetraenoyl)-sn-glycero-3-phosphate + (5Z,8Z,11Z,14Z)-eicosatetraenoate + H(+). It carries out the reaction 1-octadecanoyl-2-(5Z,8Z,11Z,14Z-eicosatetraenoyl)-sn-glycero-3-phosphate + H2O = 2-(5Z,8Z,11Z,14Z-eicosatetraenoyl)-sn-glycero-3-phosphate + octadecanoate + H(+). It catalyses the reaction a 1,2-diacyl-sn-glycero-3-phosphocholine + H2O = a 2-acyl-sn-glycero-3-phosphocholine + a fatty acid + H(+). The enzyme catalyses a 1,2-diacyl-sn-glycero-3-phosphoethanolamine + H2O = a 2-acyl-sn-glycero-3-phosphoethanolamine + a fatty acid + H(+). The catalysed reaction is a 1,2-diacyl-sn-glycero-3-phospho-L-serine + H2O = a 2-acyl-sn-glycero-3-phospho-L-serine + a fatty acid + H(+). It carries out the reaction a 1,2-diacyl-sn-glycero-3-phospho-(1'-sn-glycerol) + H2O = 2-acyl-sn-glycero-3-phospho-(1'-sn-glycerol) + a fatty acid + H(+). It catalyses the reaction 1-hexadecanoyl-2-(9Z-octadecenoyl)-sn-glycero-3-phospho-(1'-sn-glycerol) + H2O = 2-(9Z-octadecenoyl)-sn-glycero-3-phospho-(1'-sn-glycerol) + hexadecanoate + H(+). The enzyme catalyses 1-acyl-2-(5Z,8Z,11Z,14Z-eicosatetraenoyl)-sn-glycero-3-phosphocholine + H2O = 2-(5Z,8Z,11Z,14Z)-eicosatetraenoyl-sn-glycero-3-phosphocholine + a fatty acid + H(+). The catalysed reaction is 1-acyl-2-(5Z,8Z,11Z,14Z)-eicosatetraenoyl-sn-glycero-3-phosphoethanolamine + H2O = 2-(5Z,8Z,11Z,14Z)-eicosatetraenoyl-sn-glycero-3-phosphoethanolamine + a fatty acid + H(+). It carries out the reaction 1-(9Z-octadecenoyl)-2-(7Z,10Z,13Z,16Z,19Z-docosapentaenoyl)-sn-glycero-3-phospho-1D-myo-inositol + H2O = 2-(7Z,10Z,13Z,16Z,19Z-docosapentaenoyl)-sn-glycero-3-phospho-1D-myo-inositol + (9Z)-octadecenoate + H(+). It catalyses the reaction 1-(9Z-octadecenoyl)-2-(5Z,8Z,11Z,14Z-eicosatetraenoyl)-sn-glycero-3-phospho-1D-myo-inositol + H2O = 2-(5Z,8Z,11Z,14Z-eicosatetraenoyl)-sn-glycero-3-phospho-(1D-myo-inositol) + (9Z)-octadecenoate + H(+). The enzyme catalyses 1,2-di-(9Z-octadecenoyl)-sn-glycero-3-phospho-1D-myo-inositol + H2O = 2-(9Z-octadecenoyl)-sn-glycero-3-phospho-1D-myo-inositol + (9Z)-octadecenoate + H(+). The catalysed reaction is 1-(9Z-octadecenoyl)-2-(8Z,11Z,14Z-eicosatrienoyl)-sn-glycero-3-phospho-1D-myo-inositol + H2O = 2-(8Z,11Z,14Z-eicosatrienoyl)-sn-glycero-3-phospho-1D-myo-inositol + (9Z)-octadecenoate + H(+). It carries out the reaction 1,2-di-(9Z-octadecenoyl)-sn-glycero-3-phosphocholine + H2O = (9Z-octadecenoyl)-sn-glycero-3-phosphocholine + (9Z)-octadecenoate + H(+). It participates in phospholipid metabolism; phosphatidylinositol metabolism. Its activity is regulated as follows. Phosphatidate (1,2-diacyl-sn-glycero-3-phosphate, PA) can positively regulate phospholipase A1 activity. Its function is as follows. Phospholipase A1 (PLA1) that hydrolyzes ester bonds at the sn-1 position of glycerophospholipids producing a free fatty acid and a lysophospholipid. Prefers phosphatidate (1,2-diacyl-sn-glycero-3-phosphate, PA) as substrate in vitro, but can efficiently hydrolyze phosphatidylinositol (1,2-diacyl-sn-glycero-3-phospho-(1D-myo-inositol), PI), as well as a range of other glycerophospholipid substrates such as phosphatidylcholine (1,2-diacyl-sn-glycero-3-phosphocholine, PC), phosphatidylethanolamine (1,2-diacyl-sn-glycero-3-phosphoethanolamine, PE), phosphatidylserine (1,2-diacyl-sn-glycero-3-phospho-L-serine, PS) and phosphatidylglycerol (1,2-diacyl-sn-glycero-3-phospho-(1'-sn-glycerol), PG). Involved in the regulation of the endogenous content of polyunsaturated PI and PS lipids in the nervous system. Changes in these lipids extend to downstream metabolic products like PI phosphates PIP and PIP2, which play fundamental roles in cell biology. Regulates mitochondrial morphology. These dynamic changes may be due to PA hydrolysis at the mitochondrial surface. May play a regulatory role in spermatogenesis or sperm function. The chain is Phospholipase DDHD1 from Homo sapiens (Human).